A 422-amino-acid polypeptide reads, in one-letter code: Metallocarboxypeptidase A (422 aa).

The signal sequence occupies residues 1-17 (MRSVLSLALLAANVVTA). Positions 18-112 (AVVSPFDYSG…FEAYSAGYAP (95 aa)) are cleaved as a propeptide — activation peptide. Positions 119–419 (SYHSYQDHIS…AGTVAMLKAV (301 aa)) constitute a Peptidase M14 domain. Zn(2+)-binding residues include His-179 and Glu-182. Substrate-binding positions include 179 to 182 (HARE), Arg-237, and 254 to 255 (NR). Residues Cys-248 and Cys-271 are joined by a disulfide bond. Position 309 (His-309) interacts with Zn(2+). 310–311 (SY) lines the substrate pocket. The active-site Proton donor/acceptor is Glu-385.

Belongs to the peptidase M14 family. Zn(2+) is required as a cofactor.

The protein resides in the secreted. In terms of biological role, extracellular metalloprotease that contributes to pathogenicity. The polypeptide is Metallocarboxypeptidase A (MCPA) (Trichophyton equinum (Horse ringworm fungus)).